The primary structure comprises 1016 residues: MSSVAEDNSFTCDIATIFVAICRNPPANPSDSLFQYEISTLYQEAHSRWLKPPEVLFILQNHESLTLTNTAPQRPTSGSLLLFNKRVLKFFRKDGHQWRRKRDGRAIAEAHERLKVGNAEALNCYYAHGEQDPTFRRRIYWMLDPEYEHIVLVHYRDVSEREEGQQTGGQVYQFAPILSTQNVSYNQYIGDSSDIYQQSSTSPGVAEVNSNLEGSASSSEFGQALKMLKEQLSIGDEHVNSVDPHYIQPESLDSLQFLEYSDIDHLAQPTTVYQRPENNKLERCYGGNFGAQYSAKNDSNKLERCYGGYVGGAEYHSSNLMLVKNGSGPSGGTGGSGDQGSESWKDVLEACEASIPLNSEGSTPSSAKGLLAGLQEDSNWSYSNQVDQSTFLLPQDLGSFQLPASYSALVAPENNGEYCGMMEDGMKIGLPFEQEMRVTGAHNQKFTIQDISPDWGYANETTKVIIIGSFLCDPTESTWSCMFGNAQVPFEIIKEGVIRCEAPQCGPGKVNLCITSGDGLLCSEIREFEYREKPDTCCPKCSEPQTSDMSTSPNELILLVRFVQTLLSDRSSERKSNLESGNDKLLTKLKADDDQWRHVIGTIIDGSASSTSTVDWLLQELLKDKLDTWLSSRSCDEDYITCSLSKQEQGIIHMVAGLGFEWAFYPILAHGVNVDFRDIKGWSALHWAAQFGSEKMVAALIASGASAGAVTDPSRQDPNGKTAASIAASNGHKGLAGYLSEVALTNHLSSLTLEETENSKDTAQVQTEKTLNSISEQSPSGNEDQVSLKDTLAAVRNAAQAAARIQAAFRAHSFRKRKQREAALVACLQEYGMYCEDIEGISAMSKLTFGKGRNYNSAALSIQKNFRGYKDRKCFLELRQKVVKIQAHVRGYQIRKNYKVICWAVRILDKVVLRWRRKGVGLRGFRQDVESTEDSEDEDILKVFRKQKVDVAVNEAFSRVLSMSNSPEARQQYHRVLKRYCQTKAELGKTETLVGEDDDGLFDIADMEYDTLFSLP.

The CG-1 DNA-binding region spans 38–164 (ISTLYQEAHS…YRDVSEREEG (127 aa)). The segment at 324 to 343 (KNGSGPSGGTGGSGDQGSES) is disordered. The span at 328-338 (GPSGGTGGSGD) shows a compositional bias: gly residues. ANK repeat units follow at residues 647–676 (QEQGIIHMVAGLGFEWAFYPILAHGVNVDF), 680–709 (KGWSALHWAAQFGSEKMVAALIASGASAGA), and 719–748 (NGKTAASIAASNGHKGLAGYLSEVALTNHL). The tract at residues 753 to 786 (LEETENSKDTAQVQTEKTLNSISEQSPSGNEDQV) is disordered. Over residues 761-785 (DTAQVQTEKTLNSISEQSPSGNEDQ) the composition is skewed to polar residues. IQ domains follow at residues 798–827 (AAQAAARIQAAFRAHSFRKRKQREAALVAC), 855–884 (YNSAALSIQKNFRGYKDRKCFLELRQKVVK), and 878–907 (LRQKVVKIQAHVRGYQIRKNYKVICWAVRI). Residues 903–925 (WAVRILDKVVLRWRRKGVGLRGF) are calmodulin-binding. A phosphoserine mark is found at Ser-935 and Ser-962.

The protein belongs to the CAMTA family. Expressed in roots, stems, leaves, flowers and siliques.

The protein resides in the nucleus. Its function is as follows. Transcription activator that binds to the DNA consensus sequence 5'-[ACG]CGCG[GTC]-3'. Regulates transcriptional activity in response to calcium signals. Binds calmodulin in a calcium-dependent manner. Involved together with CAMTA2 and CAMTA3 in the positive regulation of a general stress response. This Arabidopsis thaliana (Mouse-ear cress) protein is Calmodulin-binding transcription activator 4.